Reading from the N-terminus, the 318-residue chain is Methionyl-tRNA formyltransferase (318 aa).

A (6S)-5,6,7,8-tetrahydrofolate-binding site is contributed by 114–117 (SLLP).

The protein belongs to the Fmt family.

The enzyme catalyses L-methionyl-tRNA(fMet) + (6R)-10-formyltetrahydrofolate = N-formyl-L-methionyl-tRNA(fMet) + (6S)-5,6,7,8-tetrahydrofolate + H(+). Functionally, attaches a formyl group to the free amino group of methionyl-tRNA(fMet). The formyl group appears to play a dual role in the initiator identity of N-formylmethionyl-tRNA by promoting its recognition by IF2 and preventing the misappropriation of this tRNA by the elongation apparatus. This chain is Methionyl-tRNA formyltransferase, found in Protochlamydia amoebophila (strain UWE25).